The chain runs to 633 residues: GTPase-GDP dissociation stimulator BEM4 (633 aa).

In terms of assembly, interacts with CDC42; the interaction is direct. Interacts with RHO1; the interaction is direct. Interacts with RHO2. Interacts with RHO4. Interacts with CDC11.

The protein resides in the nucleus. The protein localises to the cytoplasm. Probably acts as a GEF (guanine nucleotide exchange factor) for the Rho family of small GTP-binding proteins (G proteins) that stimulates the dissociation of GDP to enable subsequent binding of GTP. May also chaperone the processing and/or trafficking of small GTPases independently of GEF activity. Involved in the control of polarized cell growth via CDC42-mediated signaling. Involved in the control of cell-wall organization via RHO1-mediated signaling. May also function via RHO2 and RHO4. The chain is GTPase-GDP dissociation stimulator BEM4 from Saccharomyces cerevisiae (strain ATCC 204508 / S288c) (Baker's yeast).